The sequence spans 119 residues: MICPPGENKSMAERKQGGQGNGVGSSVVTEVKPKTQKPSLYRVLILNDDYTPMEFVVYVLERFFNKSREDATRIMLHVHQNGVGVCGVYTYEVAETKVAQVIDSARRHQHPLQCTMEKD.

The disordered stretch occupies residues 1–29; it reads MICPPGENKSMAERKQGGQGNGVGSSVVT.

The protein belongs to the ClpS family. Binds to the N-terminal domain of the chaperone ClpA.

Functionally, involved in the modulation of the specificity of the ClpAP-mediated ATP-dependent protein degradation. The polypeptide is ATP-dependent Clp protease adapter protein ClpS (Caulobacter vibrioides (strain ATCC 19089 / CIP 103742 / CB 15) (Caulobacter crescentus)).